The sequence spans 324 residues: MNDMSSDGKKVKSLSDLPGVGQSILNKLIEAGYSSLEAVAVASPQDLSVAAGIPLTTAQRIIKEAREALDIRFKTALEVKKERINTKKITTGSQALDGLLGGGIETRTMTELFGEFGSGKTQLCHQLSVNVQLPLEKGGLGGKAVYIDTEGTFRWERIEAMSKAIGLEPDSAMNNIYYMRAINSDHQMAIVDDLQELISKDPAIKLVIVDSVTSHFRAEFPGRENLAVRQQKLNKHLHQLVRLAEMYDLAVIITNQVMARPDMFYGDPTVAVGGHTLYHVPGIRVQLKKSRGNKRIARIVDAPHLPEGEVVFAITEEGVRDAEE.

114 to 121 is a binding site for ATP; that stretch reads GEFGSGKT.

Belongs to the eukaryotic RecA-like protein family.

Involved in DNA repair and in homologous recombination. Binds and assemble on single-stranded DNA to form a nucleoprotein filament. Hydrolyzes ATP in a ssDNA-dependent manner and promotes DNA strand exchange between homologous DNA molecules. The chain is DNA repair and recombination protein RadA from Sulfurisphaera tokodaii (strain DSM 16993 / JCM 10545 / NBRC 100140 / 7) (Sulfolobus tokodaii).